A 370-amino-acid chain; its full sequence is NADH-quinone oxidoreductase subunit D (370 aa).

Belongs to the complex I 49 kDa subunit family. In terms of assembly, NDH-1 is composed of 14 different subunits. Subunits NuoB, C, D, E, F, and G constitute the peripheral sector of the complex.

The protein resides in the cell membrane. The enzyme catalyses a quinone + NADH + 5 H(+)(in) = a quinol + NAD(+) + 4 H(+)(out). In terms of biological role, NDH-1 shuttles electrons from NADH, via FMN and iron-sulfur (Fe-S) centers, to quinones in the respiratory chain. The immediate electron acceptor for the enzyme in this species is believed to be a menaquinone. Couples the redox reaction to proton translocation (for every two electrons transferred, four hydrogen ions are translocated across the cytoplasmic membrane), and thus conserves the redox energy in a proton gradient. The sequence is that of NADH-quinone oxidoreductase subunit D from Desulfitobacterium hafniense (strain Y51).